A 398-amino-acid chain; its full sequence is SEC12-like protein 1 (398 aa).

M1 carries the N-acetylmethionine modification. At 1 to 337 the chain is on the cytoplasmic side; it reads MEIEEASRES…TVPKEWKEWQ (337 aa). WD repeat units follow at residues 71-110, 120-159, 162-201, 252-291, and 296-334; these read DSDG…TGIT, QNAG…VILD, KAHK…PLST, LSRK…IYHY, and HLGQ…KEWK. The helical transmembrane segment at 338-358 threads the bilayer; that stretch reads IYALLFCLFMASVIAAYVFFE. Residues 359 to 398 are Lumenal-facing; sequence NSDSFWKLPMGKDQKRPKISLFGGSSSTPSEDHSRWNLDL.

As to expression, ubiquitous with higher levels in flowers, roots and senescing leaves.

It is found in the endoplasmic reticulum membrane. Functionally, involved in Pi uptake by facilitating the trafficking of PHT1-1/PHT1;1 from the endoplasmic reticulum to the plasma membrane. In Arabidopsis thaliana (Mouse-ear cress), this protein is SEC12-like protein 1 (PHF1).